Consider the following 428-residue polypeptide: Aspartate--tRNA(Asp) ligase (428 aa).

Glu166 is a binding site for L-aspartate. Positions 188–191 are aspartate; the sequence is QLYK. L-aspartate is bound at residue Arg210. ATP contacts are provided by residues 210–212, 218–220, and Glu351; these read RAE and RHL. Positions 351 and 354 each coordinate Mg(2+). 2 residues coordinate L-aspartate: Ser354 and Arg358. 399–402 is an ATP binding site; sequence GLER.

It belongs to the class-II aminoacyl-tRNA synthetase family. Type 2 subfamily. In terms of assembly, homodimer. Requires Mg(2+) as cofactor.

It localises to the cytoplasm. The enzyme catalyses tRNA(Asp) + L-aspartate + ATP = L-aspartyl-tRNA(Asp) + AMP + diphosphate. Its function is as follows. Catalyzes the attachment of L-aspartate to tRNA(Asp) in a two-step reaction: L-aspartate is first activated by ATP to form Asp-AMP and then transferred to the acceptor end of tRNA(Asp). The polypeptide is Aspartate--tRNA(Asp) ligase (Thermoplasma acidophilum (strain ATCC 25905 / DSM 1728 / JCM 9062 / NBRC 15155 / AMRC-C165)).